The sequence spans 173 residues: ATP synthase subunit delta (173 aa).

Belongs to the ATPase delta chain family. F-type ATPases have 2 components, F(1) - the catalytic core - and F(0) - the membrane proton channel. F(1) has five subunits: alpha(3), beta(3), gamma(1), delta(1), epsilon(1). F(0) has three main subunits: a(1), b(2) and c(10-14). The alpha and beta chains form an alternating ring which encloses part of the gamma chain. F(1) is attached to F(0) by a central stalk formed by the gamma and epsilon chains, while a peripheral stalk is formed by the delta and b chains.

The protein localises to the cell inner membrane. Its function is as follows. F(1)F(0) ATP synthase produces ATP from ADP in the presence of a proton or sodium gradient. F-type ATPases consist of two structural domains, F(1) containing the extramembraneous catalytic core and F(0) containing the membrane proton channel, linked together by a central stalk and a peripheral stalk. During catalysis, ATP synthesis in the catalytic domain of F(1) is coupled via a rotary mechanism of the central stalk subunits to proton translocation. Functionally, this protein is part of the stalk that links CF(0) to CF(1). It either transmits conformational changes from CF(0) to CF(1) or is implicated in proton conduction. This chain is ATP synthase subunit delta, found in Campylobacter jejuni subsp. jejuni serotype O:2 (strain ATCC 700819 / NCTC 11168).